The primary structure comprises 192 residues: Ribose 1,5-bisphosphate phosphokinase PhnN (192 aa).

Belongs to the ribose 1,5-bisphosphokinase family.

It carries out the reaction alpha-D-ribose 1,5-bisphosphate + ATP = 5-phospho-alpha-D-ribose 1-diphosphate + ADP. It functions in the pathway metabolic intermediate biosynthesis; 5-phospho-alpha-D-ribose 1-diphosphate biosynthesis; 5-phospho-alpha-D-ribose 1-diphosphate from D-ribose 5-phosphate (route II): step 3/3. In terms of biological role, catalyzes the phosphorylation of ribose 1,5-bisphosphate to 5-phospho-D-ribosyl alpha-1-diphosphate (PRPP). The sequence is that of Ribose 1,5-bisphosphate phosphokinase PhnN from Achromobacter xylosoxidans (strain A8).